The following is a 1025-amino-acid chain: Probable outer membrane protein PmpF (1025 aa).

The N-terminal stretch at methionine 1–alanine 20 is a signal peptide. A disordered region spans residues asparagine 654–threonine 681. The span at glutamine 659–threonine 681 shows a compositional bias: polar residues. An Autotransporter domain is found at leucine 748–phenylalanine 1025.

It belongs to the PMP outer membrane protein family.

It is found in the secreted. The protein localises to the cell wall. The protein resides in the cell outer membrane. This Chlamydia muridarum (strain MoPn / Nigg) protein is Probable outer membrane protein PmpF (pmpF).